Consider the following 591-residue polypeptide: L-fucose isomerase (591 aa).

Residues E337 and D361 each act as proton acceptor in the active site. E337, D361, and H528 together coordinate Mn(2+).

This sequence belongs to the L-fucose isomerase family. Homohexamer. The cofactor is Mn(2+).

It is found in the cytoplasm. The enzyme catalyses L-fucose = L-fuculose. It functions in the pathway carbohydrate degradation; L-fucose degradation; L-lactaldehyde and glycerone phosphate from L-fucose: step 1/3. In terms of biological role, converts the aldose L-fucose into the corresponding ketose L-fuculose. The polypeptide is L-fucose isomerase (Escherichia coli O157:H7 (strain EC4115 / EHEC)).